Here is a 798-residue protein sequence, read N- to C-terminus: Suppressor of spindle checkpoint defect 1 (798 aa).

The stretch at 339-359 (ESIQQSQVNVDDMCNRIANME) forms a coiled coil.

This sequence belongs to the APC5 family. The APC/C complex is probably composed of at least 12 subunits: apc-2, apc-10, apc-11, cdc-26, emb-1, emb-27, emb-30, mat-1, mat-2, mat-3, such-1 and gfi-3. In terms of tissue distribution, expressed in head neurons, vulval precursor cells and in mature sperm stored in the spermatheca.

The protein operates within protein modification; protein ubiquitination. Its function is as follows. Probable component of the anaphase promoting complex/cyclosome (APC/C), a cell cycle-regulated E3 ubiquitin ligase that controls progression through mitosis and the G1 phase of the cell cycle. The APC/C complex acts by mediating ubiquitination and subsequent degradation of target proteins. Required for the metaphase to anaphase transition in meiosis. Plays a role in the segregation of DNA and centrioles during meiosis in male germ cells. The chain is Suppressor of spindle checkpoint defect 1 from Caenorhabditis elegans.